A 178-amino-acid polypeptide reads, in one-letter code: Ribosome maturation factor RimP (178 aa).

This sequence belongs to the RimP family.

It localises to the cytoplasm. Functionally, required for maturation of 30S ribosomal subunits. The chain is Ribosome maturation factor RimP from Streptococcus pyogenes serotype M18 (strain MGAS8232).